Reading from the N-terminus, the 432-residue chain is Cyclic 2,3-diphosphoglycerate synthetase (432 aa).

It belongs to the cyclic 2,3-diphosphoglycerate synthetase family.

The protein localises to the cytoplasm. It carries out the reaction (2R)-2,3-bisphosphoglycerate + ATP + H(+) = cyclic (2R)-2,3-bisphosphoglycerate + ADP + phosphate. Catalyzes the formation of cyclic 2,3-diphosphoglycerate (cDPG) by formation of an intramolecular phosphoanhydride bond at the expense of ATP. The polypeptide is Cyclic 2,3-diphosphoglycerate synthetase (Thermococcus kodakarensis (strain ATCC BAA-918 / JCM 12380 / KOD1) (Pyrococcus kodakaraensis (strain KOD1))).